A 162-amino-acid chain; its full sequence is Cyclic pyranopterin monophosphate synthase (162 aa).

Substrate-binding positions include 75-77 (MCH) and 115-116 (ME). Asp-130 is a catalytic residue.

This sequence belongs to the MoaC family. As to quaternary structure, homohexamer; trimer of dimers.

It carries out the reaction (8S)-3',8-cyclo-7,8-dihydroguanosine 5'-triphosphate = cyclic pyranopterin phosphate + diphosphate. It functions in the pathway cofactor biosynthesis; molybdopterin biosynthesis. Its function is as follows. Catalyzes the conversion of (8S)-3',8-cyclo-7,8-dihydroguanosine 5'-triphosphate to cyclic pyranopterin monophosphate (cPMP). The sequence is that of Cyclic pyranopterin monophosphate synthase from Geobacillus kaustophilus (strain HTA426).